The chain runs to 137 residues: MRVPVFQLSCLLGLIVCLLCSVKAQKDDQYDTEKSRILEIYNNPAVDEFTKERNIPKLIEFYRRYPARIQLPDADKRQWDEFVARYTESQTKLVDGLPAQGGWVGSVLSSTVGNLIAKFIFSLIRYDPTTPKPIGAP.

The first 24 residues, M1 to A24, serve as a signal peptide directing secretion.

It belongs to the Turandot family.

It localises to the secreted. A humoral factor that may play a role in stress tolerance. This chain is Protein Turandot X, found in Drosophila pseudoobscura pseudoobscura (Fruit fly).